Here is a 316-residue protein sequence, read N- to C-terminus: Ribose-phosphate pyrophosphokinase (316 aa).

ATP is bound by residues 37-39 (DGE) and 96-97 (RQ). The Mg(2+) site is built by histidine 131 and aspartate 171. Lysine 195 is an active-site residue. D-ribose 5-phosphate-binding positions include arginine 197, aspartate 221, and 225–229 (DTGGT).

This sequence belongs to the ribose-phosphate pyrophosphokinase family. Class I subfamily. In terms of assembly, homohexamer. The cofactor is Mg(2+).

It is found in the cytoplasm. The enzyme catalyses D-ribose 5-phosphate + ATP = 5-phospho-alpha-D-ribose 1-diphosphate + AMP + H(+). Its pathway is metabolic intermediate biosynthesis; 5-phospho-alpha-D-ribose 1-diphosphate biosynthesis; 5-phospho-alpha-D-ribose 1-diphosphate from D-ribose 5-phosphate (route I): step 1/1. Functionally, involved in the biosynthesis of the central metabolite phospho-alpha-D-ribosyl-1-pyrophosphate (PRPP) via the transfer of pyrophosphoryl group from ATP to 1-hydroxyl of ribose-5-phosphate (Rib-5-P). In Haemophilus ducreyi (strain 35000HP / ATCC 700724), this protein is Ribose-phosphate pyrophosphokinase.